The following is a 124-amino-acid chain: Large ribosomal subunit protein bL12 (124 aa).

The protein belongs to the bacterial ribosomal protein bL12 family. In terms of assembly, homodimer. Part of the ribosomal stalk of the 50S ribosomal subunit. Forms a multimeric L10(L12)X complex, where L10 forms an elongated spine to which 2 to 4 L12 dimers bind in a sequential fashion. Binds GTP-bound translation factors.

Forms part of the ribosomal stalk which helps the ribosome interact with GTP-bound translation factors. Is thus essential for accurate translation. The sequence is that of Large ribosomal subunit protein bL12 from Borreliella burgdorferi (strain ATCC 35210 / DSM 4680 / CIP 102532 / B31) (Borrelia burgdorferi).